A 352-amino-acid chain; its full sequence is Ion-translocating oxidoreductase complex subunit D (352 aa).

Transmembrane regions (helical) follow at residues I20 to G40, G42 to L62, I89 to A109, and P123 to L143. Position 187 is an FMN phosphoryl threonine (T187). The next 5 helical transmembrane spans lie at I214 to L234, W242 to F262, L267 to L287, L301 to P321, and D322 to T342.

It belongs to the NqrB/RnfD family. As to quaternary structure, the complex is composed of six subunits: RsxA, RsxB, RsxC, RsxD, RsxE and RsxG. It depends on FMN as a cofactor.

It is found in the cell inner membrane. In terms of biological role, part of a membrane-bound complex that couples electron transfer with translocation of ions across the membrane. Required to maintain the reduced state of SoxR. In Escherichia coli (strain ATCC 8739 / DSM 1576 / NBRC 3972 / NCIMB 8545 / WDCM 00012 / Crooks), this protein is Ion-translocating oxidoreductase complex subunit D.